We begin with the raw amino-acid sequence, 922 residues long: Lysine-specific demethylase 4 (922 aa).

The span at 1–15 shows a compositional bias: polar residues; the sequence is MASAATTTHFPSSRI. 2 disordered regions span residues 1 to 21 and 42 to 61; these read MASA…EPCA and SSSC…MFTD. In terms of domain architecture, JmjN spans 87-130; that stretch reads VLTFYPTMREFKNFSQYIKKIEQNGGHLKAGIAKIVAPEGWTPR. Y213 provides a ligand contact to 2-oxoglutarate. The JmjC domain occupies 223–388; it reads DAQVEEWNMN…YGKDAVLCDC (166 aa). Residues H265 and E267 each contribute to the Fe cation site. Residues N275 and K283 each contribute to the 2-oxoglutarate site. Residues C314 and H320 each coordinate Zn(2+). K321 is a binding site for 2-oxoglutarate. Residue H356 participates in Fe cation binding. Zn(2+) is bound by residues C386 and C388. The disordered stretch occupies residues 435-475; sequence KRRQSLADASKIAKRARLGASSTATDSDGSSGSSGSEEATE. Residues 453-475 are compositionally biased toward low complexity; it reads GASSTATDSDGSSGSSGSEEATE. The segment at 639-675 adopts a C2HC pre-PHD-type zinc-finger fold; it reads TTSCQLCELRGGALIPCQIGTDSTWAHVACALFNRRA. The PHD-type; degenerate zinc finger occupies 723–783; the sequence is WECVVCHRTD…GVVMICHKHE (61 aa).

This sequence belongs to the JHDM3 histone demethylase family. The cofactor is Fe(2+).

It is found in the nucleus. It catalyses the reaction N(6),N(6),N(6)-trimethyl-L-lysyl(9)-[histone H3] + 2 2-oxoglutarate + 2 O2 = N(6)-methyl-L-lysyl(9)-[histone H3] + 2 formaldehyde + 2 succinate + 2 CO2. It carries out the reaction N(6),N(6),N(6)-trimethyl-L-lysyl(36)-[histone H3] + 2 2-oxoglutarate + 2 O2 = N(6)-methyl-L-lysyl(36)-[histone H3] + 2 formaldehyde + 2 succinate + 2 CO2. Its function is as follows. Histone demethylase that specifically demethylates 'Lys-9' and 'Lys-36' residues of histone H3, thereby playing a central role in histone code. Demethylation of Lys residue generates formaldehyde and succinate. Involved in the negative regulation of lifespan in a germline-dependent fashion. The sequence is that of Lysine-specific demethylase 4 (jmjd-2) from Caenorhabditis elegans.